Consider the following 37-residue polypeptide: Mu-cyrtautoxin-As1a (37 aa).

4 disulfide bridges follow: Cys-1–Cys-15, Cys-8–Cys-19, Cys-14–Cys-35, and Cys-26–Cys-31.

Belongs to the neurotoxin 13 (insecticidal toxin ABC) family. 01 (Aps III) subfamily. As to expression, expressed by the venom gland.

It localises to the secreted. The recombinant mu-cyrtautoxin-As1a potently and voltage-independently blocks voltage-gated sodium channels (Nav) of insects. It acts by pluging the outer vestibule of the channel. It acts in combination with a weak (30%) voltage-independent block of insect voltage-gated calcium (Cav) channels (low-voltage and high-voltage channels). Tested on DUM neurons, it inhibits sodium currents with an IC(50) of 540 nM (and a Hill coefficient &gt;1, reflecting an incomplete block at higher concentrations). In vivo, it induces flaccid paralysis in adult Australian sheep blowfly Lucilia cuprina. It is both paralytic and lethal, when injected into lepidopteran larvae. It is a slower acting toxin, being lethal at 24 hours, but not paralytic at 1 hour post-injection. In Apomastus schlingeri (Trap-door spider), this protein is Mu-cyrtautoxin-As1a.